A 366-amino-acid polypeptide reads, in one-letter code: Probable dual-specificity RNA methyltransferase RlmN (366 aa).

E108 acts as the Proton acceptor in catalysis. The Radical SAM core domain maps to 114 to 352; the sequence is YSDRSTLCIS…CTVRDTKGQE (239 aa). C121 and C357 form a disulfide bridge. Residues C128, C132, and C135 each contribute to the [4Fe-4S] cluster site. Residues 178–179, S212, 235–237, and N314 contribute to the S-adenosyl-L-methionine site; these read GE and SLH. C357 (S-methylcysteine intermediate) is an active-site residue.

This sequence belongs to the radical SAM superfamily. RlmN family. It depends on [4Fe-4S] cluster as a cofactor.

It localises to the cytoplasm. It carries out the reaction adenosine(2503) in 23S rRNA + 2 reduced [2Fe-2S]-[ferredoxin] + 2 S-adenosyl-L-methionine = 2-methyladenosine(2503) in 23S rRNA + 5'-deoxyadenosine + L-methionine + 2 oxidized [2Fe-2S]-[ferredoxin] + S-adenosyl-L-homocysteine. The enzyme catalyses adenosine(37) in tRNA + 2 reduced [2Fe-2S]-[ferredoxin] + 2 S-adenosyl-L-methionine = 2-methyladenosine(37) in tRNA + 5'-deoxyadenosine + L-methionine + 2 oxidized [2Fe-2S]-[ferredoxin] + S-adenosyl-L-homocysteine. Functionally, specifically methylates position 2 of adenine 2503 in 23S rRNA and position 2 of adenine 37 in tRNAs. This is Probable dual-specificity RNA methyltransferase RlmN from Corynebacterium glutamicum (strain ATCC 13032 / DSM 20300 / JCM 1318 / BCRC 11384 / CCUG 27702 / LMG 3730 / NBRC 12168 / NCIMB 10025 / NRRL B-2784 / 534).